The chain runs to 262 residues: Putative protein-methionine-sulfoxide reductase subunit YedZ1 (262 aa).

It belongs to the MsrP family.

Part of the YedY1-YedZ1 system that may repair oxidized proteins containing methionine sulfoxide residues (Met-O). In Azospira oryzae (strain ATCC BAA-33 / DSM 13638 / PS) (Dechlorosoma suillum), this protein is Putative protein-methionine-sulfoxide reductase subunit YedZ1.